The following is a 720-amino-acid chain: Aminopeptidase RNPEPL1 (720 aa).

Residue 321 to 325 (VAMEN) coordinates substrate. A Zn(2+)-binding site is contributed by histidine 348. Glutamate 349 serves as the catalytic Proton acceptor. Zn(2+) is bound by residues histidine 352 and glutamate 371. The tract at residues 671-708 (GLGPSAEPSTEPSTDLGGAEADTNPDSPALLLGDEAPS) is disordered.

It belongs to the peptidase M1 family. Zn(2+) serves as cofactor.

The catalysed reaction is Release of N-terminal amino acids, preferentially methionine, from peptides and arylamides.. Its function is as follows. Broad specificity aminopeptidase which preferentially hydrolyzes an N-terminal methionine, citrulline or glutamine. The protein is Aminopeptidase RNPEPL1 of Mus musculus (Mouse).